A 306-amino-acid chain; its full sequence is Replication termination factor 2 (306 aa).

The tract at residues 192 to 306 (RAKLEKKTKK…HWVTHTSYCF (115 aa)) is disordered. A compositionally biased stretch (basic and acidic residues) spans 226–240 (GKSEEADPDPREKKS). The residue at position 287 (Ser-287) is a Phosphoserine.

The protein belongs to the rtf2 family. Interacts with DDI2; probably also interacts with DDI1. Undergoes proteasomal degradation, via DDI1 and DDI2. Removal from stalled replisomes and degradation are required for genome stability.

It is found in the chromosome. In terms of biological role, replication termination factor which is a component of the elongating replisome. Required for ATR pathway signaling upon DNA damage and has a positive activity during DNA replication. Might function to facilitate fork pausing at replication fork barriers like the rDNA. May be globally required to stimulate ATR signaling after the fork stalls or encounters a lesion. Interacts with nascent DNA. This chain is Replication termination factor 2, found in Rattus norvegicus (Rat).